Consider the following 182-residue polypeptide: Small ribosomal subunit protein uS4c (182 aa).

The 62-residue stretch at M82–N143 folds into the S4 RNA-binding domain.

This sequence belongs to the universal ribosomal protein uS4 family. As to quaternary structure, part of the 30S ribosomal subunit. Contacts protein S5. The interaction surface between S4 and S5 is involved in control of translational fidelity.

The protein localises to the plastid. The protein resides in the chloroplast. Its function is as follows. One of the primary rRNA binding proteins, it binds directly to 16S rRNA where it nucleates assembly of the body of the 30S subunit. Functionally, with S5 and S12 plays an important role in translational accuracy. This is Small ribosomal subunit protein uS4c (rps4) from Libertia formosa (Snowy mermaid).